The primary structure comprises 265 residues: Capsule polysaccharide export inner-membrane protein BexB (265 aa).

Helical transmembrane passes span 37 to 57 (IGFF…VMMW), 64 to 84 (KFST…AMMW), 118 to 138 (LLEV…LVMI), 151 to 171 (LIAW…ICAI), 178 to 198 (FGKI…AFFF), and 235 to 255 (ESIG…LVMV). One can recognise an ABC transmembrane type-2 domain in the interval 37-258 (IGFFWLFVEP…LLGLVMVKNF (222 aa)).

This sequence belongs to the ABC-2 integral membrane protein family.

The protein resides in the cell inner membrane. Its function is as follows. May form an ATP-driven capsule polysaccharide export apparatus, in association with the BexA, BexC and BexD proteins. This is Capsule polysaccharide export inner-membrane protein BexB (bexB) from Haemophilus influenzae.